Here is a 164-residue protein sequence, read N- to C-terminus: Interferon gamma (164 aa).

Positions 1–19 (MTCQTYNLFVLSVIMIYYG) are cleaved as a signal peptide. N-linked (GlcNAc...) asparagine glycosylation is found at asparagine 42 and asparagine 61.

It belongs to the type II (or gamma) interferon family. As to quaternary structure, homodimer.

The protein resides in the secreted. Its function is as follows. Produced by lymphocytes activated by specific antigens or mitogens. IFN-gamma, in addition to having antiviral activity, has important immunoregulatory functions. It is a potent activator of macrophages, it has antiproliferative effects on transformed cells and it can potentiate the antiviral and antitumor effects of the type I interferons. This chain is Interferon gamma (IFNG), found in Coturnix japonica (Japanese quail).